Here is a 296-residue protein sequence, read N- to C-terminus: 1,2-beta-oligomannan phosphorylase (296 aa).

Belongs to the glycosyl hydrolase 130 family. As to quaternary structure, homodimer.

The catalysed reaction is [(1-&gt;2)-beta-D-mannosyl](n) + phosphate = [(1-&gt;2)-beta-D-mannosyl](n-1) + alpha-D-mannose 1-phosphate. It participates in nucleotide-sugar biosynthesis; GDP-alpha-D-mannose biosynthesis. Probably involved in a salvage pathway for GDP-D-mannose biosynthesis. Catalyzes the reversible phosphorolysis of 1,2-beta-oligomannan. In phosphorolytic reactions, prefers 1,2-beta-oligomannan with a degree of polymerization (DP) of 3, 4 and 5. Produces alpha-D-mannose 1-phosphate, which is the precursor of GDP-D-mannose. The protein is 1,2-beta-oligomannan phosphorylase of Thermoanaerobacter sp. (strain X514).